The chain runs to 591 residues: V-type ATP synthase alpha chain (591 aa).

242-249 contributes to the ATP binding site; it reads GPFGAGKT.

This sequence belongs to the ATPase alpha/beta chains family.

The catalysed reaction is ATP + H2O + 4 H(+)(in) = ADP + phosphate + 5 H(+)(out). Produces ATP from ADP in the presence of a proton gradient across the membrane. The V-type alpha chain is a catalytic subunit. The chain is V-type ATP synthase alpha chain (atpA) from Chlamydia pneumoniae (Chlamydophila pneumoniae).